The primary structure comprises 311 residues: Protein lifeguard 3 (311 aa).

2 disordered regions span residues 1–37 and 50–72; these read MSNP…GGYP and PAGY…PGHG. Positions 53–62 are enriched in pro residues; that stretch reads YPQPMPPTHP. Phosphoserine is present on residues S81 and S83. The next 7 helical transmembrane spans lie at 110-130, 134-154, 165-185, 190-210, 221-241, 246-266, and 286-306; these read LLIT…SAFV, VAVY…LACC, IILL…ISSM, AVII…IFCF, GLFC…SIVL, VYWL…LFLA, and ITGA…VLQL.

This sequence belongs to the BI1 family. LFG subfamily.

The protein localises to the membrane. The protein resides in the lysosome membrane. It localises to the endosome membrane. In terms of biological role, negatively regulates aortic matrix metalloproteinase-9 (MMP9) production and may play a protective role in vascular remodeling. The chain is Protein lifeguard 3 (TMBIM1) from Homo sapiens (Human).